We begin with the raw amino-acid sequence, 122 residues long: Nuclear transcription factor Y subunit beta (122 aa).

A subunit association domain (SAD) region spans residues 1 to 12 (VQECVSEFISFI). The tract at residues 1–57 (VQECVSEFISFITSEASERCHQEKRKTINGEDILFAMSTLGFDSYVEPLKLYLQKFR) is b domain. The interval 58 to 122 (EAMKGEKGIG…ISGVQQIQFS (65 aa)) is c domain.

It belongs to the NFYB/HAP3 subunit family. Heterotrimeric transcription factor composed of three components, NF-YA, NF-YB and NF-YC. NF-YB and NF-YC must interact and dimerize for NF-YA association and DNA binding.

It localises to the nucleus. In terms of biological role, component of the sequence-specific heterotrimeric transcription factor (NF-Y) which specifically recognizes a 5'-CCAAT-3' box motif found in the promoters of its target genes. NF-Y can function as both an activator and a repressor, depending on its interacting cofactors. The chain is Nuclear transcription factor Y subunit beta (nfyb) from Xenopus laevis (African clawed frog).